Consider the following 89-residue polypeptide: MAKKSKIAKEKKRQQLVLKYAELRKELKEQGDYEALRKLPRDSSPTRLKNRCELTGRPRGYLRKFKMSRIAFRELAYKGHIPGVKKSSW.

The protein belongs to the universal ribosomal protein uS14 family. As to quaternary structure, part of the 30S ribosomal subunit. Contacts proteins S3 and S10.

In terms of biological role, binds 16S rRNA, required for the assembly of 30S particles and may also be responsible for determining the conformation of the 16S rRNA at the A site. The chain is Small ribosomal subunit protein uS14A from Bacillus pumilus (strain SAFR-032).